Consider the following 623-residue polypeptide: Chaperone protein HtpG (623 aa).

Positions 1–330 (MIMTQEKKKF…SEDLPLNISR (330 aa)) are a; substrate-binding. The b stretch occupies residues 331-546 (ESLQHNSVLE…DAAMDIRMER (216 aa)). Positions 477 to 497 (SDIDVEQTTSQSEEKNTDSKK) are disordered. Positions 488-497 (SEEKNTDSKK) are enriched in basic and acidic residues. Positions 547 to 623 (FLIEQKQIAN…LNDIVQKAIL (77 aa)) are c.

It belongs to the heat shock protein 90 family. As to quaternary structure, homodimer.

Its subcellular location is the cytoplasm. Molecular chaperone. Has ATPase activity. This chain is Chaperone protein HtpG, found in Rickettsia massiliae (strain Mtu5).